A 234-amino-acid chain; its full sequence is Probable GTP-binding protein EngB (234 aa).

The EngB-type G domain occupies 23–209 (AVPEVAFAGR…QRTVAGWLCL (187 aa)). Residues 31-38 (GRSNAGKS), 58-62 (GRTQH), 82-85 (DLPG), 149-152 (TKAD), and 187-190 (LFSS) each bind GTP. Residues Ser-38 and Thr-60 each coordinate Mg(2+). Residues 210–234 (PEAMPPSPDAEPAKKTPSPDAQRGE) are disordered.

The protein belongs to the TRAFAC class TrmE-Era-EngA-EngB-Septin-like GTPase superfamily. EngB GTPase family. It depends on Mg(2+) as a cofactor.

Its function is as follows. Necessary for normal cell division and for the maintenance of normal septation. In Ralstonia nicotianae (strain ATCC BAA-1114 / GMI1000) (Ralstonia solanacearum), this protein is Probable GTP-binding protein EngB.